The primary structure comprises 216 residues: NKG2-D type II integral membrane protein (216 aa).

The Cytoplasmic portion of the chain corresponds to 1–51 (MGWIRGRRPRHNLEMSEFHNYKLGLAKSDFSTRCQKQRCPVIKSKCRENAS). A helical; Signal-anchor for type II membrane protein transmembrane segment spans residues 52 to 72 (PLFFCCFIAVAMGIRFIIMVT). The Extracellular segment spans residues 73 to 216 (IWSAVFLNSL…NTYICMQRTV (144 aa)). Cystine bridges form between Cys96–Cys105 and Cys99–Cys110. The 116-residue stretch at 98–213 (PCPKNWICYK…SIPNTYICMQ (116 aa)) folds into the C-type lectin domain. 4 N-linked (GlcNAc...) asparagine glycosylation sites follow: Asn115, Asn131, Asn163, and Asn202. 2 cysteine pairs are disulfide-bonded: Cys127–Cys211 and Cys189–Cys203.

As to quaternary structure, homodimer; disulfide-linked. Heterohexamer composed of two subunits of KLRK1 and four subunits of HCST/DAP10. Interacts (via transmembrane domain) with HCST/DAP10 (via transmembrane domain); the interaction is required for KLRK1 NK cell surface and induces NK cell-mediated cytotoxicity. Can form disulfide-bonded heterodimer with CD94. Interacts with CEACAM1; recruits PTPN6 that dephosphorylates VAV1. In terms of tissue distribution, natural killer cells.

It localises to the cell membrane. Functionally, functions as an activating and costimulatory receptor involved in immunosurveillance upon binding to various cellular stress-inducible ligands displayed at the surface of autologous tumor cells and virus-infected cells. Provides both stimulatory and costimulatory innate immune responses on activated killer (NK) cells, leading to cytotoxic activity. Acts as a costimulatory receptor for T-cell receptor (TCR) in CD8(+) T-cell-mediated adaptive immune responses by amplifying T-cell activation. Stimulates perforin-mediated elimination of ligand-expressing tumor cells. Signaling involves calcium influx, culminating in the expression of TNF-alpha. Participates in NK cell-mediated bone marrow graft rejection. May play a regulatory role in differentiation and survival of NK cells. Binds to ligands belonging to various subfamilies of MHC class I-related glycoproteins. The sequence is that of NKG2-D type II integral membrane protein (KLRK1) from Macaca fascicularis (Crab-eating macaque).